Here is a 101-residue protein sequence, read N- to C-terminus: Small ribosomal subunit protein uS14 (101 aa).

A disordered region spans residues 51–72; it reads LPRDSSPSRQRNPCRQTGRPHG. Residues 52-65 are compositionally biased toward polar residues; it reads PRDSSPSRQRNPCR.

This sequence belongs to the universal ribosomal protein uS14 family. As to quaternary structure, part of the 30S ribosomal subunit. Contacts proteins S3 and S10.

Its function is as follows. Binds 16S rRNA, required for the assembly of 30S particles and may also be responsible for determining the conformation of the 16S rRNA at the A site. This Buchnera aphidicola subsp. Acyrthosiphon kondoi (Acyrthosiphon kondoi symbiotic bacterium) protein is Small ribosomal subunit protein uS14.